Reading from the N-terminus, the 306-residue chain is Aspartate carbamoyltransferase catalytic subunit (306 aa).

Positions 55 and 56 each coordinate carbamoyl phosphate. Position 84 (Lys-84) interacts with L-aspartate. Carbamoyl phosphate contacts are provided by Arg-105, His-133, and Gln-136. Positions 166 and 227 each coordinate L-aspartate. The carbamoyl phosphate site is built by Leu-265 and Pro-266.

It belongs to the aspartate/ornithine carbamoyltransferase superfamily. ATCase family. As to quaternary structure, heterododecamer (2C3:3R2) of six catalytic PyrB chains organized as two trimers (C3), and six regulatory PyrI chains organized as three dimers (R2).

It carries out the reaction carbamoyl phosphate + L-aspartate = N-carbamoyl-L-aspartate + phosphate + H(+). The protein operates within pyrimidine metabolism; UMP biosynthesis via de novo pathway; (S)-dihydroorotate from bicarbonate: step 2/3. Functionally, catalyzes the condensation of carbamoyl phosphate and aspartate to form carbamoyl aspartate and inorganic phosphate, the committed step in the de novo pyrimidine nucleotide biosynthesis pathway. In Aeromonas hydrophila subsp. hydrophila (strain ATCC 7966 / DSM 30187 / BCRC 13018 / CCUG 14551 / JCM 1027 / KCTC 2358 / NCIMB 9240 / NCTC 8049), this protein is Aspartate carbamoyltransferase catalytic subunit.